The chain runs to 197 residues: Chromophore lyase CpcT/CpeT (197 aa).

It belongs to the CpcT/CpeT biliprotein lyase family.

In terms of biological role, covalently attaches a chromophore to Cys residue(s) of phycobiliproteins. The protein is Chromophore lyase CpcT/CpeT of Synechococcus sp. (strain WH8103).